The following is a 281-amino-acid chain: MKKWMMAAAVVSLMALSACSNDGSEAIVETKNGNITKDEFYNEMKERVGKSVLRDLIDEKVLSKKYKVTDEEIDREIERIKEAYGTQYDLAVQQNGEKVIREMVKLDLLRTKAAVEDIKVTEKELKEYYDNYKPKIRASHILVKDEKTAKEVKAKLDKGEDFSKLAKEYSQDPGSASNGGDLGWFGPGKMVKEFEEAAYKLKVGEVSDPVKTDYGYHIIKVTDKEKKKSFNEMKDEIAFEVKRNKLDPATMQSKVDKLVKDAGVEIKDKDLQDVIEQQGKQ.

The N-terminal stretch at 1–18 (MKKWMMAAAVVSLMALSA) is a signal peptide. Cys-19 carries the N-palmitoyl cysteine lipid modification. A lipid anchor (S-diacylglycerol cysteine) is attached at Cys-19. In terms of domain architecture, PpiC spans 133–223 (KPKIRASHIL…YGYHIIKVTD (91 aa)).

This sequence belongs to the PrsA family.

It is found in the cell membrane. The enzyme catalyses [protein]-peptidylproline (omega=180) = [protein]-peptidylproline (omega=0). Its function is as follows. Plays a major role in protein secretion by helping the post-translocational extracellular folding of several secreted proteins. This chain is Foldase protein PrsA, found in Geobacillus kaustophilus (strain HTA426).